Reading from the N-terminus, the 194-residue chain is Small ribosomal subunit protein uS7 (194 aa).

It belongs to the universal ribosomal protein uS7 family. As to quaternary structure, part of the 30S ribosomal subunit.

Functionally, one of the primary rRNA binding proteins, it binds directly to 16S rRNA where it nucleates assembly of the head domain of the 30S subunit. Is located at the subunit interface close to the decoding center. This chain is Small ribosomal subunit protein uS7, found in Methanocorpusculum labreanum (strain ATCC 43576 / DSM 4855 / Z).